Reading from the N-terminus, the 474-residue chain is ATP synthase subunit beta, chloroplastic (474 aa).

Residue glycine 155–threonine 162 coordinates ATP.

The protein belongs to the ATPase alpha/beta chains family. In terms of assembly, F-type ATPases have 2 components, CF(1) - the catalytic core - and CF(0) - the membrane proton channel. CF(1) has five subunits: alpha(3), beta(3), gamma(1), delta(1), epsilon(1). CF(0) has four main subunits: a(1), b(1), b'(1) and c(9-12).

Its subcellular location is the plastid. It localises to the chloroplast thylakoid membrane. It catalyses the reaction ATP + H2O + 4 H(+)(in) = ADP + phosphate + 5 H(+)(out). Functionally, produces ATP from ADP in the presence of a proton gradient across the membrane. The catalytic sites are hosted primarily by the beta subunits. The chain is ATP synthase subunit beta, chloroplastic from Thalassiosira pseudonana (Marine diatom).